The following is a 1102-amino-acid chain: Probable ubiquitin-conjugating enzyme E2 23 (1102 aa).

Disordered regions lie at residues 1-20 (MEHE…DSSV), 25-111 (ASLS…DGNY), 396-418 (LPKV…PVHE), 579-602 (SPGN…SHQE), 661-710 (DESV…DIYA), and 760-800 (QAES…KNIL). Basic and acidic residues predominate over residues 31-44 (DSEHPNIYRQDIVK). Residues 59 to 88 (GDSDSDSDISDEEEDDDDDEDNDDDDEDVE) are compositionally biased toward acidic residues. Polar residues predominate over residues 579–596 (SPGNSFEEATQQDNGYQD). A compositionally biased stretch (polar residues) spans 779–800 (SKVNVTDNCESKGTQANAKNIL). In terms of domain architecture, UBC core spans 850 to 1010 (QWFKKVDQDW…TFLLNCKTMM (161 aa)). Catalysis depends on cysteine 936, which acts as the Glycyl thioester intermediate.

It belongs to the ubiquitin-conjugating enzyme family.

The enzyme catalyses S-ubiquitinyl-[E1 ubiquitin-activating enzyme]-L-cysteine + [E2 ubiquitin-conjugating enzyme]-L-cysteine = [E1 ubiquitin-activating enzyme]-L-cysteine + S-ubiquitinyl-[E2 ubiquitin-conjugating enzyme]-L-cysteine.. It functions in the pathway protein modification; protein ubiquitination. Accepts the ubiquitin from the E1 complex and catalyzes its covalent attachment to other proteins. The chain is Probable ubiquitin-conjugating enzyme E2 23 (UBC23) from Arabidopsis thaliana (Mouse-ear cress).